We begin with the raw amino-acid sequence, 98 residues long: NADH-ubiquinone oxidoreductase chain 4L (98 aa).

The next 3 membrane-spanning stretches (helical) occupy residues 1 to 21 (MSLTYMNMFLAFTISLVGLLM), 29 to 49 (ALLCLEGMMLSLFVMMTITIL), and 61 to 81 (IILLVFAACEAALGLSLLVMV).

Belongs to the complex I subunit 4L family. In terms of assembly, core subunit of respiratory chain NADH dehydrogenase (Complex I) which is composed of 45 different subunits.

It localises to the mitochondrion inner membrane. It carries out the reaction a ubiquinone + NADH + 5 H(+)(in) = a ubiquinol + NAD(+) + 4 H(+)(out). Functionally, core subunit of the mitochondrial membrane respiratory chain NADH dehydrogenase (Complex I) which catalyzes electron transfer from NADH through the respiratory chain, using ubiquinone as an electron acceptor. Part of the enzyme membrane arm which is embedded in the lipid bilayer and involved in proton translocation. The sequence is that of NADH-ubiquinone oxidoreductase chain 4L (MT-ND4L) from Rhinophylla pumilio (Dwarf little fruit bat).